A 370-amino-acid chain; its full sequence is 3-dehydroquinate synthase (370 aa).

Residues 112-116 (GVVGD), 136-137 (TS), Lys-149, Lys-158, and 176-179 (TLRT) contribute to the NAD(+) site. 3 residues coordinate Zn(2+): Glu-191, His-254, and His-276.

The protein belongs to the sugar phosphate cyclases superfamily. Dehydroquinate synthase family. The cofactor is Co(2+). It depends on Zn(2+) as a cofactor. NAD(+) is required as a cofactor.

Its subcellular location is the cytoplasm. The catalysed reaction is 7-phospho-2-dehydro-3-deoxy-D-arabino-heptonate = 3-dehydroquinate + phosphate. The protein operates within metabolic intermediate biosynthesis; chorismate biosynthesis; chorismate from D-erythrose 4-phosphate and phosphoenolpyruvate: step 2/7. Functionally, catalyzes the conversion of 3-deoxy-D-arabino-heptulosonate 7-phosphate (DAHP) to dehydroquinate (DHQ). This Xanthomonas oryzae pv. oryzae (strain MAFF 311018) protein is 3-dehydroquinate synthase.